A 635-amino-acid chain; its full sequence is Sulfite reductase [ferredoxin], chloroplastic (635 aa).

A chloroplast-targeting transit peptide spans 1-50 (MSGAIGGAEVHGFRGAAAQLPRSRVLGRPIRVAPPAAARPGGASAGSIRA). 2 disordered regions span residues 31-50 (RVAP…SIRA) and 245-267 (PEVT…PEPI). Residues 245–254 (PEVTKARNDN) are compositionally biased toward basic and acidic residues. [4Fe-4S] cluster-binding residues include cysteine 494, cysteine 500, cysteine 540, and cysteine 544. Position 544 (cysteine 544) interacts with siroheme.

The protein belongs to the nitrite and sulfite reductase 4Fe-4S domain family. In terms of assembly, monomer. Interacts with ferredoxin. Siroheme is required as a cofactor. It depends on [4Fe-4S] cluster as a cofactor. Post-translationally, phosphorylated; this phosphorylation reduces DNA-binding. As to expression, present in roots and leaves (at protein level). In leaves, sulfite reductase activity is detected in both bundle sheath and mesophyll cell types.

It is found in the plastid. Its subcellular location is the chloroplast stroma. The protein resides in the chloroplast nucleoid. It localises to the plastid stroma. It catalyses the reaction hydrogen sulfide + 6 oxidized [2Fe-2S]-[ferredoxin] + 3 H2O = sulfite + 6 reduced [2Fe-2S]-[ferredoxin] + 7 H(+). With respect to regulation, inhibited by the tryptophan-modifying reagent, N-bromosuccinimide (NBS), by the lysine-modifying reagent, N-acetylsuccinimide and by the arginine-modifying reagent, phenylglyoxal. Complex formation with ferredoxin prevents these inhibitions. Essential protein with sulfite reductase activity required in assimilatory sulfate reduction pathway during both primary and secondary metabolism and thus involved in development and growth. Functionally, DNA-binding protein that binds to both double-stranded and single-stranded DNA without significant sequence specificity to reversibly repress the transcriptional activity of chloroplast nucleoids by promoting DNA compaction and possibly regulate DNA replication. This is Sulfite reductase [ferredoxin], chloroplastic (SIR) from Zea mays (Maize).